The chain runs to 170 residues: J domain-containing protein (170 aa).

Residues 17–82 form the J domain; it reads DYYALLGCDE…SKRALYDKWR (66 aa). Residues 101-170 are disordered; the sequence is QQSMHWSKPN…VISKFRNYEI (70 aa). Basic and acidic residues predominate over residues 110 to 120; sequence NTKDRMLEGEP. Low complexity-rich tracts occupy residues 121–135 and 142–153; these read GKPS…SNPG and GGAALWGRWGAG.

In Manduca sexta (Tobacco hawkmoth), this protein is J domain-containing protein (jdp).